The chain runs to 808 residues: Auxin response factor 4 (808 aa).

Residues 1–13 (MPPAAMAPPPPPQ) show a composition bias toward pro residues. Residues 1–20 (MPPAAMAPPPPPQGSSTGDP) are disordered. A DNA-binding region (TF-B3) is located at residues 129–231 (FCKTLTASDT…ELRVGVRRAM (103 aa)). A compositionally biased stretch (basic and acidic residues) spans 342–352 (PSTIPRPDRVS). 3 disordered regions span residues 342–433 (PSTI…DSDV), 661–691 (TAGTATENEKSGQQAQQSSKDVQSKTQVAST), and 778–808 (QKMNSKSNAPRKDDSSENEKGHLPMPNKSDN). Positions 402–432 (AQAQRSQNSTVLQGQEQMTLRSNLTESNDSD) are enriched in polar residues. Positions 692–785 (RSCTKVHKQG…EVQKMNSKSN (94 aa)) constitute a PB1 domain. Residues 787–799 (PRKDDSSENEKGH) are compositionally biased toward basic and acidic residues.

This sequence belongs to the ARF family. Homodimers and heterodimers. In terms of tissue distribution, expressed in roots, culms, leaves and young panicles.

It is found in the nucleus. In terms of biological role, auxin response factors (ARFs) are transcriptional factors that bind specifically to the DNA sequence 5'-TGTCTC-3' found in the auxin-responsive promoter elements (AuxREs). This is Auxin response factor 4 (ARF4) from Oryza sativa subsp. japonica (Rice).